We begin with the raw amino-acid sequence, 517 residues long: Bifunctional purine biosynthesis protein PurH (517 aa).

The 146-residue stretch at methionine 1–threonine 146 folds into the MGS-like domain.

Belongs to the PurH family.

It catalyses the reaction (6R)-10-formyltetrahydrofolate + 5-amino-1-(5-phospho-beta-D-ribosyl)imidazole-4-carboxamide = 5-formamido-1-(5-phospho-D-ribosyl)imidazole-4-carboxamide + (6S)-5,6,7,8-tetrahydrofolate. The catalysed reaction is IMP + H2O = 5-formamido-1-(5-phospho-D-ribosyl)imidazole-4-carboxamide. The protein operates within purine metabolism; IMP biosynthesis via de novo pathway; 5-formamido-1-(5-phospho-D-ribosyl)imidazole-4-carboxamide from 5-amino-1-(5-phospho-D-ribosyl)imidazole-4-carboxamide (10-formyl THF route): step 1/1. Its pathway is purine metabolism; IMP biosynthesis via de novo pathway; IMP from 5-formamido-1-(5-phospho-D-ribosyl)imidazole-4-carboxamide: step 1/1. The chain is Bifunctional purine biosynthesis protein PurH from Prochlorococcus marinus (strain MIT 9303).